A 319-amino-acid polypeptide reads, in one-letter code: Biotin synthase (319 aa).

Positions 44-273 (IHGDGIDLCS…EAKIRLAGGR (230 aa)) constitute a Radical SAM core domain. [4Fe-4S] cluster-binding residues include Cys62, Cys66, and Cys69. Residues Ser106, Cys138, Cys198, and Arg268 each contribute to the [2Fe-2S] cluster site.

Belongs to the radical SAM superfamily. Biotin synthase family. In terms of assembly, homodimer. [4Fe-4S] cluster is required as a cofactor. [2Fe-2S] cluster serves as cofactor.

The catalysed reaction is (4R,5S)-dethiobiotin + (sulfur carrier)-SH + 2 reduced [2Fe-2S]-[ferredoxin] + 2 S-adenosyl-L-methionine = (sulfur carrier)-H + biotin + 2 5'-deoxyadenosine + 2 L-methionine + 2 oxidized [2Fe-2S]-[ferredoxin]. The protein operates within cofactor biosynthesis; biotin biosynthesis; biotin from 7,8-diaminononanoate: step 2/2. Functionally, catalyzes the conversion of dethiobiotin (DTB) to biotin by the insertion of a sulfur atom into dethiobiotin via a radical-based mechanism. In Clostridium perfringens (strain ATCC 13124 / DSM 756 / JCM 1290 / NCIMB 6125 / NCTC 8237 / Type A), this protein is Biotin synthase.